The following is a 958-amino-acid chain: N-terminal acetyltransferase B complex subunit NAA25 homolog (958 aa).

3 TPR repeats span residues 7-42, 78-111, and 320-353; these read AVLERRLRPIYDSLDSQQFKKALSDCDKVLKKHPNT, ELTLQAFVHCYRDSNQHMKVVTLYERIIQVDPSE, and FFAYKQIGKLTKQIPDMDDMTSIFGEQVDKMLEY.

This sequence belongs to the MDM20/NAA25 family. As to quaternary structure, component of the N-terminal acetyltransferase B (NatB) complex. Interacts with acer-1. As to expression, expressed in germline and somatic cells.

Its subcellular location is the cytoplasm. It localises to the nucleus. The protein localises to the chromosome. Non-catalytic subunit of the NatB complex which catalyzes acetylation of the N-terminal methionine residues of proteins beginning with Met-Asp or Met-Glu. Required for chromosome organization and arrangement; specifically for assembly of the central region components of the synaptonemal complex onto chromosomes during meiosis and for DNA double stranded break formation and repair. Acts downstream of xnd-1 to regulate levels of histone acetylation in germ and somatic cell nuclei by controlling acetyl-CoA production through antagonizing the acetyl-CoA hydrolase activity of acer-1. The chain is N-terminal acetyltransferase B complex subunit NAA25 homolog from Caenorhabditis elegans.